Consider the following 714-residue polypeptide: Polyribonucleotide nucleotidyltransferase (714 aa).

2 residues coordinate Mg(2+): D488 and D494. The KH domain maps to 555–614 (PRIEVMNIPTDKIRDVIGSGGKVIREIVEKTGAKINIEDDGTVKIASSNGKEIEAAKKWI). Residues 624–692 (GEIYEGTVVK…ERGKVRLSMK (69 aa)) form the S1 motif domain.

This sequence belongs to the polyribonucleotide nucleotidyltransferase family. Mg(2+) is required as a cofactor.

The protein localises to the cytoplasm. The catalysed reaction is RNA(n+1) + phosphate = RNA(n) + a ribonucleoside 5'-diphosphate. Involved in mRNA degradation. Catalyzes the phosphorolysis of single-stranded polyribonucleotides processively in the 3'- to 5'-direction. The chain is Polyribonucleotide nucleotidyltransferase from Brucella melitensis biotype 2 (strain ATCC 23457).